The primary structure comprises 374 residues: DNA-directed RNA polymerase subunit alpha (374 aa).

Positions 1-270 are alpha N-terminal domain (alpha-NTD); it reads MIFDEDSSSV…DQFQQFINFD (270 aa). Residues 282–374 form an alpha C-terminal domain (alpha-CTD) region; the sequence is KDVLPYDSNL…ESLSKQYSEE (93 aa).

It belongs to the RNA polymerase alpha chain family. As to quaternary structure, homodimer. The RNAP catalytic core consists of 2 alpha, 1 beta, 1 beta' and 1 omega subunit. When a sigma factor is associated with the core the holoenzyme is formed, which can initiate transcription.

The catalysed reaction is RNA(n) + a ribonucleoside 5'-triphosphate = RNA(n+1) + diphosphate. Its function is as follows. DNA-dependent RNA polymerase catalyzes the transcription of DNA into RNA using the four ribonucleoside triphosphates as substrates. This Ehrlichia ruminantium (strain Gardel) protein is DNA-directed RNA polymerase subunit alpha.